The following is a 692-amino-acid chain: Protein hook (692 aa).

The Calponin-homology (CH) domain occupies 6 to 123 (SEMYYSLLEW…RLLQLVLGCA (118 aa)). The stretch at 135–576 (EIMGLEEELQ…YQSKVIQLET (442 aa)) forms a coiled coil. The segment at 161–180 (AGERSPSSSASGGAGSGGAV) is disordered.

This sequence belongs to the hook family. In terms of assembly, homodimer. Interacts with microtubules via its N-terminus.

The protein resides in the cytoplasm. Its subcellular location is the cytoskeleton. It localises to the endosome. It is found in the synapse. Functionally, involved in endocytic trafficking by stabilizing organelles of the endocytic pathway. Probably acts as a cytoskeletal linker protein required to tether endosome vesicles to the cytoskeleton. Involved in modulation of endocytosis at stages required for down-regulation of membrane proteins that control synapse size. Not involved in synaptic vesicle recycling. Required in R7 cells for boss endocytosis into multivesicular bodies (MVBs). Has a role in regulating adult longevity. This chain is Protein hook, found in Drosophila willistoni (Fruit fly).